Here is a 262-residue protein sequence, read N- to C-terminus: MSWYPGHIEKAKRQIKDLLRLVNTVVEVRDARAPFATSAYGVDFSRKETIILLNKVDIADEKTTKKWVEFFKKQGKRVITTHKGEPRKVLLKKLSFDRLARVLIVGVPNTGKSTIINKLKGKRASSVGAQPGITKGIQWFSLENGVKILDTPGILYKNIFSEDLAAKLLLVGSLPVERIEDQRIFERAFEIFARSIGIESSFSEFFEDFARKRGLLKKGGVPDIERALMLFFTEVAQGKAGRVSFERPEDITPVQQEQTRGV.

One can recognise a CP-type G domain in the interval 12-157 (KRQIKDLLRL…ILDTPGILYK (146 aa)). GTP contacts are provided by residues 54 to 57 (NKVD), 109 to 114 (NTGKST), and G153.

It belongs to the TRAFAC class YlqF/YawG GTPase family. MTG1 subfamily.

The protein resides in the cytoplasm. Required for a late step of 50S ribosomal subunit assembly. Has GTPase activity. Binds to the 23S rRNA. The protein is Ribosome biogenesis GTPase A of Thermotoga maritima (strain ATCC 43589 / DSM 3109 / JCM 10099 / NBRC 100826 / MSB8).